Reading from the N-terminus, the 314-residue chain is MMKVVFMGTPDFSVPVLRRLIEDGYDVVGVVTQPDRPVGRKKVLTPTPVKVEAEKHGIPVVQPLKIREKDEYEKVLALEPDLIVTAAFGQIVPNEILEAPKYGCINVHASLLPELRGGAPIHYAIMEGKEKTGITIMYMVEKLDAGDILTQVEVEIEERETTGSLFDKLSEAGAHLLSKTVPLLIQGKLEPIKQSEAEVTFAYNIKREQEIIDWTKTGEEVYNHIRGLNPWPVAYTTLAGQVIKVWWGEKVSITEKAEPGTIVALEEDGFVVATGNETGVKITELQPSGKKRMSCSQFLRGTKPEIGTKLGENA.

110–113 provides a ligand contact to (6S)-5,6,7,8-tetrahydrofolate; sequence SLLP.

The protein belongs to the Fmt family.

It carries out the reaction L-methionyl-tRNA(fMet) + (6R)-10-formyltetrahydrofolate = N-formyl-L-methionyl-tRNA(fMet) + (6S)-5,6,7,8-tetrahydrofolate + H(+). In terms of biological role, attaches a formyl group to the free amino group of methionyl-tRNA(fMet). The formyl group appears to play a dual role in the initiator identity of N-formylmethionyl-tRNA by promoting its recognition by IF2 and preventing the misappropriation of this tRNA by the elongation apparatus. The polypeptide is Methionyl-tRNA formyltransferase (Bacillus mycoides (strain KBAB4) (Bacillus weihenstephanensis)).